A 71-amino-acid chain; its full sequence is DNA-directed RNA polymerase subunit epsilon (71 aa).

The protein belongs to the RNA polymerase subunit epsilon family. RNAP is composed of a core of 2 alpha, a beta and a beta' subunit. The core is associated with a delta subunit, and at least one of epsilon or omega. When a sigma factor is associated with the core the holoenzyme is formed, which can initiate transcription.

The enzyme catalyses RNA(n) + a ribonucleoside 5'-triphosphate = RNA(n+1) + diphosphate. A non-essential component of RNA polymerase (RNAP). The protein is DNA-directed RNA polymerase subunit epsilon of Staphylococcus saprophyticus subsp. saprophyticus (strain ATCC 15305 / DSM 20229 / NCIMB 8711 / NCTC 7292 / S-41).